Here is a 296-residue protein sequence, read N- to C-terminus: Fructose-bisphosphate aldolase class 1 (296 aa).

The Proton acceptor role is filled by Glu175. Residue Lys212 is the Schiff-base intermediate with dihydroxyacetone-P of the active site.

This sequence belongs to the class I fructose-bisphosphate aldolase family.

It carries out the reaction beta-D-fructose 1,6-bisphosphate = D-glyceraldehyde 3-phosphate + dihydroxyacetone phosphate. It functions in the pathway carbohydrate degradation; glycolysis; D-glyceraldehyde 3-phosphate and glycerone phosphate from D-glucose: step 4/4. In Staphylococcus carnosus (strain TM300), this protein is Fructose-bisphosphate aldolase class 1 (fda).